Reading from the N-terminus, the 101-residue chain is Small ribosomal subunit protein uS14 (101 aa).

A disordered region spans residues 51-70; it reads LPRDSSPSRQRNRCSQTGRP. Residues 52–68 are compositionally biased toward polar residues; the sequence is PRDSSPSRQRNRCSQTG.

This sequence belongs to the universal ribosomal protein uS14 family. As to quaternary structure, part of the 30S ribosomal subunit. Contacts proteins S3 and S10.

Functionally, binds 16S rRNA, required for the assembly of 30S particles and may also be responsible for determining the conformation of the 16S rRNA at the A site. This is Small ribosomal subunit protein uS14 from Mannheimia succiniciproducens (strain KCTC 0769BP / MBEL55E).